The following is an 82-amino-acid chain: Putative membrane protein insertion efficiency factor (82 aa).

This sequence belongs to the UPF0161 family.

Its subcellular location is the cell inner membrane. Functionally, could be involved in insertion of integral membrane proteins into the membrane. In Francisella tularensis subsp. holarctica (strain LVS), this protein is Putative membrane protein insertion efficiency factor.